We begin with the raw amino-acid sequence, 342 residues long: UDP-3-O-acylglucosamine N-acyltransferase (342 aa).

H253 serves as the catalytic Proton acceptor.

This sequence belongs to the transferase hexapeptide repeat family. LpxD subfamily. In terms of assembly, homotrimer.

It carries out the reaction a UDP-3-O-[(3R)-3-hydroxyacyl]-alpha-D-glucosamine + a (3R)-hydroxyacyl-[ACP] = a UDP-2-N,3-O-bis[(3R)-3-hydroxyacyl]-alpha-D-glucosamine + holo-[ACP] + H(+). The protein operates within bacterial outer membrane biogenesis; LPS lipid A biosynthesis. Catalyzes the N-acylation of UDP-3-O-acylglucosamine using 3-hydroxyacyl-ACP as the acyl donor. Is involved in the biosynthesis of lipid A, a phosphorylated glycolipid that anchors the lipopolysaccharide to the outer membrane of the cell. This chain is UDP-3-O-acylglucosamine N-acyltransferase, found in Rickettsia canadensis (strain McKiel).